Here is a 234-residue protein sequence, read N- to C-terminus: Ribonuclease 3 (234 aa).

The RNase III domain occupies 13–136; the sequence is YITLEKALGY…LMAGVYLEAG (124 aa). E49 is a binding site for Mg(2+). Residue D53 is part of the active site. Mg(2+) is bound by residues S122 and E125. E125 is an active-site residue. The 70-residue stretch at 163–232 folds into the DRBM domain; the sequence is DYKTALQELT…AYQALQKLKG (70 aa).

Belongs to the ribonuclease III family. In terms of assembly, homodimer. Mg(2+) serves as cofactor.

It is found in the cytoplasm. It carries out the reaction Endonucleolytic cleavage to 5'-phosphomonoester.. Functionally, digests double-stranded RNA. Involved in the processing of primary rRNA transcript to yield the immediate precursors to the large and small rRNAs (23S and 16S). Processes some mRNAs, and tRNAs when they are encoded in the rRNA operon. Processes pre-crRNA and tracrRNA of type II CRISPR loci if present in the organism. This Helicobacter acinonychis (strain Sheeba) protein is Ribonuclease 3.